The following is a 127-amino-acid chain: Dual endothelin-1/VEGF signal peptide receptor (127 aa).

Residues 1 to 65 lie on the Extracellular side of the membrane; that stretch reads MNALYVTTVP…EMKSRWNWGS (65 aa). A helical transmembrane segment spans residues 66–84; it reads ITCIICFTCVGSQLSMSSS. Over 85-127 the chain is Cytoplasmic; sequence KASNFSGPLQLYQRGIGHITNSYKRPQAPAWPCLSSGTMGRSH.

In terms of tissue distribution, widely expressed with higher levels in kidney and aorta.

The protein resides in the cell membrane. In terms of biological role, dual receptor for both endothelin-1 and the signal sequence of vascular endothelial growth factor A. Does not act as a receptor for angiotensin-2. Does not bind the VEGFA mature protein. May play a role in angiogenesis with a significant role in cardiovascular and neural development. This Mus musculus (Mouse) protein is Dual endothelin-1/VEGF signal peptide receptor.